A 72-amino-acid chain; its full sequence is Penaeidin-2b (72 aa).

Residues 1–21 form the signal peptide; the sequence is MRLVVCLVFLASFALVCQGEA. 3 cysteine pairs are disulfide-bonded: cysteine 45-cysteine 59, cysteine 48-cysteine 66, and cysteine 60-cysteine 67. Lysine 71 bears the Lysine amide mark.

It belongs to the penaeidin family.

It localises to the cytoplasmic granule. In terms of biological role, antibacterial and antifungal activity. Presents chitin-binding activity. In Penaeus vannamei (Whiteleg shrimp), this protein is Penaeidin-2b.